A 407-amino-acid polypeptide reads, in one-letter code: 45 kDa calcium-binding protein (407 aa).

The N-terminal stretch at 1-35 (MVWSWVAMASRWGPLVGLAPRCLWLLGAVLLMDAS) is a signal peptide. Asn40 carries an N-linked (GlcNAc...) asparagine glycan. EF-hand domains follow at residues 98 to 133 (RSRR…KTAE) and 137 to 172 (EAME…SKGH). The residue at position 99 (Ser99) is a Phosphoserine. The Ca(2+) site is built by Asp111, Asn113, Asp115, Lys117, Glu122, Asp150, Asp152, Asp154, His156, and Glu161. A phosphothreonine mark is found at Thr193 and Thr217. Positions 249-259 (GSSLAGAPGPG) are enriched in low complexity. The segment at 249 to 282 (GSSLAGAPGPGDQRQGPGIAGKSGKVLREPQPGC) is disordered. Residues Asp291, Asp293, Asp295, Gln297, and Glu302 each contribute to the Ca(2+) site. EF-hand domains are found at residues 291 to 313 (DQDG…TVEN), 323 to 358 (WVKD…MNEY), and 359 to 394 (NALN…FTGS). A Phosphothreonine modification is found at Thr310. The Ca(2+) site is built by Asp336, Asn338, and Asp340. A Phosphothreonine modification is found at Thr344. Glu347, Asp372, Asn374, Asn376, His378, and Glu383 together coordinate Ca(2+). Residues 354 to 407 (PMNEYNALNEAKQMIAVADENQNHHLEPEEVLKYSEFFTGSKLVDYARSVHEEF) form a necessary for intracellular retention in Golgi apparatus lumen region.

Belongs to the CREC family.

The protein resides in the golgi apparatus lumen. Its function is as follows. May regulate calcium-dependent activities in the endoplasmic reticulum lumen or post-ER compartment. The chain is 45 kDa calcium-binding protein (SDF4) from Macaca fascicularis (Crab-eating macaque).